The chain runs to 144 residues: Maximins 4/H3 type 1 (144 aa).

The N-terminal stretch at 1 to 18 (MNFKYIIAVSFFIASAYA) is a signal peptide. Residues 19-43 (RSEEKDVQSLSQRDVLEEESLREIR) constitute a propeptide that is removed on maturation. N70 bears the Asparagine amide mark. Positions 74–123 (TAEDHEVMKRLEAVMRDLDSLDHPEEASERETRGFNQEEIANLFTKKEKR) are excised as a propeptide. The residue at position 143 (I143) is an Isoleucine amide.

This sequence belongs to the bombinin family. As to expression, expressed by the skin glands.

It localises to the secreted. Maximin-4 shows antibacterial activity against both Gram-positive and Gram-negative bacteria. It also shows antimicrobial activity against the fungus C.albicans, but not against A.flavus nor P.uticale. It has little hemolytic activity. It does not possess a significant cytotoxicity against tumor cell lines. It does not possess a significant anti-HIV activity. Functionally, maximin-H3 shows antibacterial activity against both Gram-positive and Gram-negative bacteria. It also shows antimicrobial activity against the fungus C.albicans. Shows strong hemolytic activity. In Bombina maxima (Giant fire-bellied toad), this protein is Maximins 4/H3 type 1.